The following is a 93-amino-acid chain: Phosphocarrier protein HPr (93 aa).

The HPr domain maps to 2-89 (AERRVNVGWA…KLVAEGLEEL (88 aa)). His15 acts as the Pros-phosphohistidine intermediate in catalysis.

This sequence belongs to the HPr family.

It is found in the cytoplasm. In terms of biological role, general (non sugar-specific) component of the phosphoenolpyruvate-dependent sugar phosphotransferase system (sugar PTS). This major carbohydrate active-transport system catalyzes the phosphorylation of incoming sugar substrates concomitantly with their translocation across the cell membrane. The phosphoryl group from phosphoenolpyruvate (PEP) is transferred to the phosphoryl carrier protein HPr by enzyme I. Phospho-HPr then transfers it to the PTS EIIA domain. This Streptomyces coelicolor (strain ATCC BAA-471 / A3(2) / M145) protein is Phosphocarrier protein HPr (ptsH).